Consider the following 330-residue polypeptide: Ketol-acid reductoisomerase (NADP(+)) (330 aa).

The region spanning 2-182 is the KARI N-terminal Rossmann domain; that stretch reads VKIFYDKDVT…GLTKVGVIQT (181 aa). Residues 25 to 28, Arg48, Ser53, and 83 to 86 each bind NADP(+); these read YGSQ and DEVQ. Residue His108 is part of the active site. Position 134 (Gly134) interacts with NADP(+). Residues 183-328 enclose the KARI C-terminal knotted domain; sequence TFREETETDL…KELRKMCGLE (146 aa). Mg(2+) is bound by residues Asp191, Glu195, Glu227, and Glu231. Substrate is bound at residue Ser252.

This sequence belongs to the ketol-acid reductoisomerase family. It depends on Mg(2+) as a cofactor.

It carries out the reaction (2R)-2,3-dihydroxy-3-methylbutanoate + NADP(+) = (2S)-2-acetolactate + NADPH + H(+). The catalysed reaction is (2R,3R)-2,3-dihydroxy-3-methylpentanoate + NADP(+) = (S)-2-ethyl-2-hydroxy-3-oxobutanoate + NADPH + H(+). It functions in the pathway amino-acid biosynthesis; L-isoleucine biosynthesis; L-isoleucine from 2-oxobutanoate: step 2/4. The protein operates within amino-acid biosynthesis; L-valine biosynthesis; L-valine from pyruvate: step 2/4. Its function is as follows. Involved in the biosynthesis of branched-chain amino acids (BCAA). Catalyzes an alkyl-migration followed by a ketol-acid reduction of (S)-2-acetolactate (S2AL) to yield (R)-2,3-dihydroxy-isovalerate. In the isomerase reaction, S2AL is rearranged via a Mg-dependent methyl migration to produce 3-hydroxy-3-methyl-2-ketobutyrate (HMKB). In the reductase reaction, this 2-ketoacid undergoes a metal-dependent reduction by NADPH to yield (R)-2,3-dihydroxy-isovalerate. The chain is Ketol-acid reductoisomerase (NADP(+)) from Methanocaldococcus jannaschii (strain ATCC 43067 / DSM 2661 / JAL-1 / JCM 10045 / NBRC 100440) (Methanococcus jannaschii).